Reading from the N-terminus, the 926-residue chain is Protein Niban 1 (926 aa).

A lipid anchor (N-myristoyl glycine) is attached at Gly2. 5 positions are modified to phosphoserine: Ser578, Ser581, Ser595, Ser601, and Ser640. Disordered stretches follow at residues Leu604–Ser699 and Val719–Asn889. Polar residues predominate over residues Val661–Leu672. Ser699 is modified (phosphoserine). Residues Asn733–Ala745 show a composition bias toward basic and acidic residues. Ser755 bears the Phosphoserine mark. Residues Cys756–Gln767 show a composition bias toward basic and acidic residues. A compositionally biased stretch (low complexity) spans Gly784 to Thr797. The segment covering Val840 to Pro854 has biased composition (polar residues). A Phosphoserine modification is found at Ser923.

The protein belongs to the Niban family.

It localises to the cytoplasm. It is found in the membrane. In terms of biological role, regulates phosphorylation of a number of proteins involved in translation regulation including EIF2A, EIF4EBP1 and RPS6KB1. May be involved in the endoplasmic reticulum stress response. The chain is Protein Niban 1 from Mus musculus (Mouse).